The sequence spans 258 residues: Global transcriptional regulator CodY (258 aa).

The tract at residues 1–156 is GAF domain; the sequence is MSSLLDKTRM…SATIIGLEIL (156 aa). Residues 204–223 constitute a DNA-binding region (H-T-H motif); that stretch reads ASKIADKVGITRSVIVNALR.

This sequence belongs to the CodY family.

It localises to the cytoplasm. In terms of biological role, DNA-binding global transcriptional regulator which is involved in the adaptive response to starvation and acts by directly or indirectly controlling the expression of numerous genes in response to nutrient availability. During rapid exponential growth, CodY is highly active and represses genes whose products allow adaptation to nutrient depletion. This chain is Global transcriptional regulator CodY, found in Clostridium botulinum (strain ATCC 19397 / Type A).